Reading from the N-terminus, the 111-residue chain is Macrodomain Ori protein (111 aa).

Belongs to the MaoP family.

Functionally, involved in the organization of the Ori region of the chromosome into a macrodomain (MD). It constrains DNA mobility in the Ori macrodomain and limits long-distance DNA interactions with other chromosomal regions. The protein is Macrodomain Ori protein of Haemophilus influenzae (strain ATCC 51907 / DSM 11121 / KW20 / Rd).